A 422-amino-acid chain; its full sequence is L-threonine dehydratase biosynthetic IlvA (422 aa).

Position 60 is an N6-(pyridoxal phosphate)lysine (K60). Pyridoxal 5'-phosphate contacts are provided by residues N87, 190-194 (GGGGL), and S315. In terms of domain architecture, ACT-like spans 339–413 (HYFIVNFPQR…KPFHYVEVNK (75 aa)).

The protein belongs to the serine/threonine dehydratase family. As to quaternary structure, homotetramer. It depends on pyridoxal 5'-phosphate as a cofactor.

It carries out the reaction L-threonine = 2-oxobutanoate + NH4(+). It participates in amino-acid biosynthesis; L-isoleucine biosynthesis; 2-oxobutanoate from L-threonine: step 1/1. Catalyzes the anaerobic formation of alpha-ketobutyrate and ammonia from threonine in a two-step reaction. The first step involved a dehydration of threonine and a production of enamine intermediates (aminocrotonate), which tautomerizes to its imine form (iminobutyrate). Both intermediates are unstable and short-lived. The second step is the nonenzymatic hydrolysis of the enamine/imine intermediates to form 2-ketobutyrate and free ammonia. In the low water environment of the cell, the second step is accelerated by RidA. The polypeptide is L-threonine dehydratase biosynthetic IlvA (ilvA) (Bacillus subtilis (strain 168)).